The sequence spans 1462 residues: Gag-Pol polyprotein (1462 aa).

G2 carries N-myristoyl glycine; by host lipidation. The segment at 7-31 (VLRGKKADELEKVRLRPGGKKKYKL) is interaction with Gp41. The short motif at 16-22 (LEKVRLR) is the Nuclear export signal element. Residues 26–32 (KKKYKLK) carry the Nuclear localization signal motif. The disordered stretch occupies residues 111–136 (ETGTAEKMPDTSRPTAPPSGKGGNYP). The residue at position 135 (Y135) is a Phosphotyrosine; by host. Residues 191–228 (NCVGDHQAAMQIIREIINEEAADWDANHPIPGPLPAGQ) form an interaction with human PPIA/CYPA and NUP153 region. Positions 279–365 (YNPTNILDIK…GGPGQKARLM (87 aa)) are dimerization/Multimerization of capsid protein p24. 2 CCHC-type zinc fingers span residues 389-406 (IKCW…QCRA) and 410-427 (QGCW…NCPD). A disordered region spans residues 439–510 (GKEAPQFPRG…GPMQGDNRGL (72 aa)). Low complexity predominate over residues 456–469 (TNSTPIGSSSGSTG). Residues 473-491 (AAREKAEGAETETIQRGDR) show a composition bias toward basic and acidic residues. The dimerization of protease stretch occupies residues 513–517 (PQFSL). The region spanning 532 to 601 (VEVLLDTGAD…TPINIFGRNI (70 aa)) is the Peptidase A2 domain. Catalysis depends on D537, which acts as the For protease activity; shared with dimeric partner. 2 dimerization of protease regions span residues 561 to 567 (GIGGFIN) and 600 to 612 (NILT…LNLP). The Reverse transcriptase domain maps to 655–845 (EGQLEEAPPT…PPYRWMGYEL (191 aa)). Residues D721, D796, and D797 each contribute to the Mg(2+) site. Positions 838-846 (YRWMGYELW) are RT 'primer grip'. The short motif at 1007–1023 (WEQWWDNYWQVTWIPDW) is the Tryptophan repeat motif element. An RNase H type-1 domain is found at 1043–1166 (IPGTETFYTD…VDHLVSQGIR (124 aa)). Mg(2+)-binding residues include D1052, E1087, D1107, and D1158. The Integrase-type; degenerate zinc finger occupies 1172 to 1213 (EKIEPAQEEHEKYHTNVKELCHKFDIPQLVARQIVNTCAQYQ). Residues 1222-1373 (QVNAEVGTWQ…TPSERLINMI (152 aa)) form the Integrase catalytic domain. Positions 1233, 1285, and 1321 each coordinate Mg(2+). The integrase-type DNA-binding region spans 1392 to 1439 (FRVYFREGRDQLWKGPGELLWKGDGAVIVKVGTDIKIIPRRKAKIIRD).

In terms of assembly, homotrimer; further assembles as hexamers of trimers. Interacts with gp41 (via C-terminus). Interacts with host CALM1; this interaction induces a conformational change in the Matrix protein, triggering exposure of the myristate group. Interacts with host AP3D1; this interaction allows the polyprotein trafficking to multivesicular bodies during virus assembly. Part of the pre-integration complex (PIC) which is composed of viral genome, matrix protein, Vpr and integrase. Homodimer; the homodimer further multimerizes as homohexamers or homopentamers. Interacts with human PPIA/CYPA. Interacts with human NUP153. Interacts with host PDZD8; this interaction stabilizes the capsid. Interacts with monkey TRIM5; this interaction destabilizes the capsid. As to quaternary structure, homodimer, whose active site consists of two apposed aspartic acid residues. In terms of assembly, heterodimer of p66 RT and p51 RT (RT p66/p51). Heterodimerization of RT is essential for DNA polymerase activity. The overall folding of the subdomains is similar in p66 RT and p51 RT but the spatial arrangements of the subdomains are dramatically different. Homotetramer; may further associate as a homohexadecamer. Part of the pre-integration complex (PIC) which is composed of viral genome, matrix protein, Vpr and integrase. Interacts with human SMARCB1/INI1 and human PSIP1/LEDGF isoform 1. Interacts with human KPNA3; this interaction might play a role in nuclear import of the pre-integration complex. Interacts with human NUP153; this interaction might play a role in nuclear import of the pre-integration complex. The cofactor is Mg(2+). In terms of processing, specific enzymatic cleavages by the viral protease yield mature proteins. The protease is released by autocatalytic cleavage. The polyprotein is cleaved during and after budding, this process is termed maturation. Proteolytic cleavage of p66 RT removes the RNase H domain to yield the p51 RT subunit. Nucleocapsid protein p7 might be further cleaved after virus entry.

The protein resides in the host cell membrane. The protein localises to the host endosome. It is found in the host multivesicular body. It localises to the virion membrane. Its subcellular location is the host nucleus. The protein resides in the host cytoplasm. The protein localises to the virion. The catalysed reaction is Endopeptidase for which the P1 residue is preferably hydrophobic.. It carries out the reaction Endohydrolysis of RNA in RNA/DNA hybrids. Three different cleavage modes: 1. sequence-specific internal cleavage of RNA. Human immunodeficiency virus type 1 and Moloney murine leukemia virus enzymes prefer to cleave the RNA strand one nucleotide away from the RNA-DNA junction. 2. RNA 5'-end directed cleavage 13-19 nucleotides from the RNA end. 3. DNA 3'-end directed cleavage 15-20 nucleotides away from the primer terminus.. It catalyses the reaction 3'-end directed exonucleolytic cleavage of viral RNA-DNA hybrid.. The enzyme catalyses DNA(n) + a 2'-deoxyribonucleoside 5'-triphosphate = DNA(n+1) + diphosphate. With respect to regulation, protease: The viral protease is inhibited by many synthetic protease inhibitors (PIs), such as amprenavir, atazanavir, indinavir, loprinavir, nelfinavir, ritonavir and saquinavir. Use of protease inhibitors in tritherapy regimens permit more ambitious therapeutic strategies. Reverse transcriptase/ribonuclease H: RT can be inhibited either by nucleoside RT inhibitors (NRTIs) or by non nucleoside RT inhibitors (NNRTIs). NRTIs act as chain terminators, whereas NNRTIs inhibit DNA polymerization by binding a small hydrophobic pocket near the RT active site and inducing an allosteric change in this region. Classical NRTIs are abacavir, adefovir (PMEA), didanosine (ddI), lamivudine (3TC), stavudine (d4T), tenofovir (PMPA), zalcitabine (ddC), and zidovudine (AZT). Classical NNRTIs are atevirdine (BHAP U-87201E), delavirdine, efavirenz (DMP-266), emivirine (I-EBU), and nevirapine (BI-RG-587). The tritherapies used as a basic effective treatment of AIDS associate two NRTIs and one NNRTI. Functionally, mediates, with Gag polyprotein, the essential events in virion assembly, including binding the plasma membrane, making the protein-protein interactions necessary to create spherical particles, recruiting the viral Env proteins, and packaging the genomic RNA via direct interactions with the RNA packaging sequence (Psi). Gag-Pol polyprotein may regulate its own translation, by the binding genomic RNA in the 5'-UTR. At low concentration, the polyprotein would promote translation, whereas at high concentration, the polyprotein would encapsidate genomic RNA and then shut off translation. Its function is as follows. Targets the polyprotein to the plasma membrane via a multipartite membrane-binding signal, that includes its myristoylated N-terminus. Matrix protein is part of the pre-integration complex. Implicated in the release from host cell mediated by Vpu. Binds to RNA. In terms of biological role, forms the conical core that encapsulates the genomic RNA-nucleocapsid complex in the virion. Most core are conical, with only 7% tubular. The core is constituted by capsid protein hexamer subunits. The core is disassembled soon after virion entry. Host restriction factors such as TRIM5-alpha or TRIMCyp bind retroviral capsids and cause premature capsid disassembly, leading to blocks in reverse transcription. Capsid restriction by TRIM5 is one of the factors which restricts HIV-1 to the human species. Host PIN1 apparently facilitates the virion uncoating. On the other hand, interactions with PDZD8 or CYPA stabilize the capsid. Encapsulates and protects viral dimeric unspliced genomic RNA (gRNA). Binds these RNAs through its zinc fingers. Acts as a nucleic acid chaperone which is involved in rearangement of nucleic acid secondary structure during gRNA retrotranscription. Also facilitates template switch leading to recombination. As part of the polyprotein, participates in gRNA dimerization, packaging, tRNA incorporation and virion assembly. Functionally, aspartyl protease that mediates proteolytic cleavages of Gag and Gag-Pol polyproteins during or shortly after the release of the virion from the plasma membrane. Cleavages take place as an ordered, step-wise cascade to yield mature proteins. This process is called maturation. Displays maximal activity during the budding process just prior to particle release from the cell. Also cleaves Nef and Vif, probably concomitantly with viral structural proteins on maturation of virus particles. Hydrolyzes host EIF4GI and PABP1 in order to shut off the capped cellular mRNA translation. The resulting inhibition of cellular protein synthesis serves to ensure maximal viral gene expression and to evade host immune response. Its function is as follows. Multifunctional enzyme that converts the viral RNA genome into dsDNA in the cytoplasm, shortly after virus entry into the cell. This enzyme displays a DNA polymerase activity that can copy either DNA or RNA templates, and a ribonuclease H (RNase H) activity that cleaves the RNA strand of RNA-DNA heteroduplexes in a partially processive 3' to 5' endonucleasic mode. Conversion of viral genomic RNA into dsDNA requires many steps. A tRNA(3)-Lys binds to the primer-binding site (PBS) situated at the 5'-end of the viral RNA. RT uses the 3' end of the tRNA primer to perform a short round of RNA-dependent minus-strand DNA synthesis. The reading proceeds through the U5 region and ends after the repeated (R) region which is present at both ends of viral RNA. The portion of the RNA-DNA heteroduplex is digested by the RNase H, resulting in a ssDNA product attached to the tRNA primer. This ssDNA/tRNA hybridizes with the identical R region situated at the 3' end of viral RNA. This template exchange, known as minus-strand DNA strong stop transfer, can be either intra- or intermolecular. RT uses the 3' end of this newly synthesized short ssDNA to perform the RNA-dependent minus-strand DNA synthesis of the whole template. RNase H digests the RNA template except for two polypurine tracts (PPTs) situated at the 5'-end and near the center of the genome. It is not clear if both polymerase and RNase H activities are simultaneous. RNase H probably can proceed both in a polymerase-dependent (RNA cut into small fragments by the same RT performing DNA synthesis) and a polymerase-independent mode (cleavage of remaining RNA fragments by free RTs). Secondly, RT performs DNA-directed plus-strand DNA synthesis using the PPTs that have not been removed by RNase H as primers. PPTs and tRNA primers are then removed by RNase H. The 3' and 5' ssDNA PBS regions hybridize to form a circular dsDNA intermediate. Strand displacement synthesis by RT to the PBS and PPT ends produces a blunt ended, linear dsDNA copy of the viral genome that includes long terminal repeats (LTRs) at both ends. In terms of biological role, catalyzes viral DNA integration into the host chromosome, by performing a series of DNA cutting and joining reactions. This enzyme activity takes place after virion entry into a cell and reverse transcription of the RNA genome in dsDNA. The first step in the integration process is 3' processing. This step requires a complex comprising the viral genome, matrix protein, Vpr and integrase. This complex is called the pre-integration complex (PIC). The integrase protein removes 2 nucleotides from each 3' end of the viral DNA, leaving recessed CA OH's at the 3' ends. In the second step, the PIC enters cell nucleus. This process is mediated through integrase and Vpr proteins, and allows the virus to infect a non dividing cell. This ability to enter the nucleus is specific of lentiviruses, other retroviruses cannot and rely on cell division to access cell chromosomes. In the third step, termed strand transfer, the integrase protein joins the previously processed 3' ends to the 5' ends of strands of target cellular DNA at the site of integration. The 5'-ends are produced by integrase-catalyzed staggered cuts, 5 bp apart. A Y-shaped, gapped, recombination intermediate results, with the 5'-ends of the viral DNA strands and the 3' ends of target DNA strands remaining unjoined, flanking a gap of 5 bp. The last step is viral DNA integration into host chromosome. This involves host DNA repair synthesis in which the 5 bp gaps between the unjoined strands are filled in and then ligated. Since this process occurs at both cuts flanking the HIV genome, a 5 bp duplication of host DNA is produced at the ends of HIV-1 integration. Alternatively, Integrase may catalyze the excision of viral DNA just after strand transfer, this is termed disintegration. This Homo sapiens (Human) protein is Gag-Pol polyprotein (gag-pol).